Consider the following 332-residue polypeptide: Holliday junction branch migration complex subunit RuvB (332 aa).

The segment at 1 to 181 (MARILDNDVM…FGITGHMEYY (181 aa)) is large ATPase domain (RuvB-L). Residues leucine 20, arginine 21, glycine 62, lysine 65, threonine 66, threonine 67, 128-130 (EDF), arginine 171, tyrosine 181, and arginine 218 contribute to the ATP site. Residue threonine 66 participates in Mg(2+) binding. The interval 182–252 (QEKDLTEIVE…ITDRALTMLD (71 aa)) is small ATPAse domain (RuvB-S). The tract at residues 255-332 (REGLDYIDQK…RHLGYPYQNT (78 aa)) is head domain (RuvB-H). DNA-binding residues include arginine 291, arginine 310, arginine 312, and arginine 315.

It belongs to the RuvB family. Homohexamer. Forms an RuvA(8)-RuvB(12)-Holliday junction (HJ) complex. HJ DNA is sandwiched between 2 RuvA tetramers; dsDNA enters through RuvA and exits via RuvB. An RuvB hexamer assembles on each DNA strand where it exits the tetramer. Each RuvB hexamer is contacted by two RuvA subunits (via domain III) on 2 adjacent RuvB subunits; this complex drives branch migration. In the full resolvosome a probable DNA-RuvA(4)-RuvB(12)-RuvC(2) complex forms which resolves the HJ.

It localises to the cytoplasm. The catalysed reaction is ATP + H2O = ADP + phosphate + H(+). In terms of biological role, the RuvA-RuvB-RuvC complex processes Holliday junction (HJ) DNA during genetic recombination and DNA repair, while the RuvA-RuvB complex plays an important role in the rescue of blocked DNA replication forks via replication fork reversal (RFR). RuvA specifically binds to HJ cruciform DNA, conferring on it an open structure. The RuvB hexamer acts as an ATP-dependent pump, pulling dsDNA into and through the RuvAB complex. RuvB forms 2 homohexamers on either side of HJ DNA bound by 1 or 2 RuvA tetramers; 4 subunits per hexamer contact DNA at a time. Coordinated motions by a converter formed by DNA-disengaged RuvB subunits stimulates ATP hydrolysis and nucleotide exchange. Immobilization of the converter enables RuvB to convert the ATP-contained energy into a lever motion, pulling 2 nucleotides of DNA out of the RuvA tetramer per ATP hydrolyzed, thus driving DNA branch migration. The RuvB motors rotate together with the DNA substrate, which together with the progressing nucleotide cycle form the mechanistic basis for DNA recombination by continuous HJ branch migration. Branch migration allows RuvC to scan DNA until it finds its consensus sequence, where it cleaves and resolves cruciform DNA. The sequence is that of Holliday junction branch migration complex subunit RuvB from Streptococcus pyogenes serotype M3 (strain ATCC BAA-595 / MGAS315).